The chain runs to 379 residues: Cytochrome b (379 aa).

Helical transmembrane passes span 33–53 (FGSL…FLAM), 77–98 (WLIR…YLHI), 113–133 (WNVG…GYVL), and 178–198 (FFAF…VHLI). 2 residues coordinate heme b: H83 and H97. Heme b is bound by residues H182 and H196. Position 201 (H201) interacts with a ubiquinone. 4 consecutive transmembrane segments (helical) span residues 226-246 (YKDI…ALFS), 288-308 (LGGV…PLLH), 320-340 (FTQV…WIGG), and 347-367 (FIII…VLAP).

This sequence belongs to the cytochrome b family. The cytochrome bc1 complex contains 3 respiratory subunits (MT-CYB, CYC1 and UQCRFS1), 2 core proteins (UQCRC1 and UQCRC2) and probably 6 low-molecular weight proteins. Heme b serves as cofactor.

The protein resides in the mitochondrion inner membrane. Its function is as follows. Component of the ubiquinol-cytochrome c reductase complex (complex III or cytochrome b-c1 complex) that is part of the mitochondrial respiratory chain. The b-c1 complex mediates electron transfer from ubiquinol to cytochrome c. Contributes to the generation of a proton gradient across the mitochondrial membrane that is then used for ATP synthesis. In Poeciliopsis occidentalis (Gila topminnow), this protein is Cytochrome b (mt-cyb).